Reading from the N-terminus, the 84-residue chain is Small ribosomal subunit protein bS20 (84 aa).

This sequence belongs to the bacterial ribosomal protein bS20 family.

Functionally, binds directly to 16S ribosomal RNA. The chain is Small ribosomal subunit protein bS20 from Levilactobacillus brevis (strain ATCC 367 / BCRC 12310 / CIP 105137 / JCM 1170 / LMG 11437 / NCIMB 947 / NCTC 947) (Lactobacillus brevis).